The primary structure comprises 596 residues: M-phase inducer phosphatase (596 aa).

Phosphoserine occurs at positions 99 and 178. Positions 174–221 are disordered; sequence LSSSSFDSYLRPNVSRSRSSGNAPPFLRSRSSSSYSINKKKGTSGGQA. The Rhodanese domain occupies 429–533; it reads IFDKCIIIDC…FYENHKNRCD (105 aa). Cysteine 480 serves as the catalytic Phosphocysteine intermediate.

It belongs to the MPI phosphatase family. In terms of assembly, interacts with rad24 during G2 in a srk1-dependent manner; the interaction is increased during osmostress. Post-translationally, phosphorylated by srk1 in the N-terminus; phosphorylation promotes nuclear exclusion.

The protein localises to the cytoplasm. It is found in the nucleus. The catalysed reaction is O-phospho-L-tyrosyl-[protein] + H2O = L-tyrosyl-[protein] + phosphate. Its function is as follows. Tyrosine protein phosphatase which functions as a dosage-dependent inducer of mitotic and meiotic progression. Directly dephosphorylates cdc2 and stimulates its kinase activity. Required for the G2/M transition of the cell cycle. Required for induction of meiosis II. The polypeptide is M-phase inducer phosphatase (Schizosaccharomyces pombe (strain 972 / ATCC 24843) (Fission yeast)).